A 230-amino-acid polypeptide reads, in one-letter code: uncharacterized protein (230 aa).

Transmembrane regions (helical) follow at residues 4–24 (ACIA…MVKL), 30–50 (LPFL…LMMF), 67–87 (LLGP…HIIV), 91–111 (VPIL…GLIF), 148–168 (MTVV…PLFL), and 210–230 (MTLC…LFHI).

This sequence belongs to the YohK (E.coli)/YwbG (IPA-22R) (B.subtilis) family.

The protein resides in the cell membrane. This is an uncharacterized protein from Bacillus subtilis (strain 168).